The sequence spans 362 residues: Chorismate synthase (362 aa).

The NADP(+) site is built by R48 and R54. Residues 125–127 (RSS), 238–239 (NA), G278, 293–297 (KPTSS), and R319 contribute to the FMN site.

Belongs to the chorismate synthase family. In terms of assembly, homotetramer. The cofactor is FMNH2.

The catalysed reaction is 5-O-(1-carboxyvinyl)-3-phosphoshikimate = chorismate + phosphate. The protein operates within metabolic intermediate biosynthesis; chorismate biosynthesis; chorismate from D-erythrose 4-phosphate and phosphoenolpyruvate: step 7/7. Catalyzes the anti-1,4-elimination of the C-3 phosphate and the C-6 proR hydrogen from 5-enolpyruvylshikimate-3-phosphate (EPSP) to yield chorismate, which is the branch point compound that serves as the starting substrate for the three terminal pathways of aromatic amino acid biosynthesis. This reaction introduces a second double bond into the aromatic ring system. In Aeromonas salmonicida (strain A449), this protein is Chorismate synthase.